Consider the following 226-residue polypeptide: ATP synthase subunit a (226 aa).

Transmembrane regions (helical) follow at residues 17-37 (FNYLFHLILVAIIVLIVAKLA), 79-99 (LVATIGLIVLTSNVIGIIPGF), 105-125 (SLNLTLCLALSVFLYYNFEGI), 168-188 (FGNIKGDDLFLMVVLSLAPWV), and 200-222 (MALLQTFIFMILTYVYLAGAVVV).

It belongs to the ATPase A chain family. As to quaternary structure, F-type ATPases have 2 components, CF(1) - the catalytic core - and CF(0) - the membrane proton channel. CF(1) has five subunits: alpha(3), beta(3), gamma(1), delta(1), epsilon(1). CF(0) has three main subunits: a(1), b(2) and c(9-12). The alpha and beta chains form an alternating ring which encloses part of the gamma chain. CF(1) is attached to CF(0) by a central stalk formed by the gamma and epsilon chains, while a peripheral stalk is formed by the delta and b chains.

The protein resides in the cell inner membrane. In terms of biological role, key component of the proton channel; it plays a direct role in the translocation of protons across the membrane. This chain is ATP synthase subunit a, found in Campylobacter fetus subsp. fetus (strain 82-40).